A 495-amino-acid polypeptide reads, in one-letter code: tRNA modification GTPase MnmE (495 aa).

3 residues coordinate (6S)-5-formyl-5,6,7,8-tetrahydrofolate: Arg28, Glu89, and Lys128. The region spanning 223–417 is the TrmE-type G domain; the sequence is GVRIVLGGCP…LRAQTLHLLH (195 aa). Position 233 (Asn233) interacts with K(+). GTP-binding positions include 233–238, 252–258, and 277–280; these read NAGKSS, SSVPGTT, and DTAG. Position 237 (Ser237) interacts with Mg(2+). Residues Ser252, Val254, and Thr257 each contribute to the K(+) site. Thr258 provides a ligand contact to Mg(2+). Lys495 contacts (6S)-5-formyl-5,6,7,8-tetrahydrofolate.

Belongs to the TRAFAC class TrmE-Era-EngA-EngB-Septin-like GTPase superfamily. TrmE GTPase family. In terms of assembly, homodimer. Heterotetramer of two MnmE and two MnmG subunits. The cofactor is K(+).

The protein localises to the cytoplasm. Its function is as follows. Exhibits a very high intrinsic GTPase hydrolysis rate. Involved in the addition of a carboxymethylaminomethyl (cmnm) group at the wobble position (U34) of certain tRNAs, forming tRNA-cmnm(5)s(2)U34. The protein is tRNA modification GTPase MnmE of Treponema pallidum (strain Nichols).